The sequence spans 644 residues: 1-deoxy-D-xylulose-5-phosphate synthase (644 aa).

Residues His-78 and 120–122 (GHA) each bind thiamine diphosphate. Residue Asp-149 coordinates Mg(2+). Residues 150–151 (AA), Asn-178, and Glu-373 each bind thiamine diphosphate. Asn-178 lines the Mg(2+) pocket.

This sequence belongs to the transketolase family. DXPS subfamily. In terms of assembly, homodimer. Mg(2+) is required as a cofactor. It depends on thiamine diphosphate as a cofactor.

It catalyses the reaction D-glyceraldehyde 3-phosphate + pyruvate + H(+) = 1-deoxy-D-xylulose 5-phosphate + CO2. The protein operates within metabolic intermediate biosynthesis; 1-deoxy-D-xylulose 5-phosphate biosynthesis; 1-deoxy-D-xylulose 5-phosphate from D-glyceraldehyde 3-phosphate and pyruvate: step 1/1. Catalyzes the acyloin condensation reaction between C atoms 2 and 3 of pyruvate and glyceraldehyde 3-phosphate to yield 1-deoxy-D-xylulose-5-phosphate (DXP). This chain is 1-deoxy-D-xylulose-5-phosphate synthase, found in Chlamydia caviae (strain ATCC VR-813 / DSM 19441 / 03DC25 / GPIC) (Chlamydophila caviae).